A 511-amino-acid polypeptide reads, in one-letter code: Coatomer subunit delta (511 aa).

The segment covering 167–177 (QQARRDAERQG) has biased composition (basic and acidic residues). A disordered region spans residues 167–188 (QQARRDAERQGKKAPGFGGFGS). Ser-223 is subject to Phosphoserine. An N6-acetyllysine mark is found at Lys-233 and Lys-241. Ser-244 carries the post-translational modification Phosphoserine. Residues 271-511 (MESVHMKIEE…TFLVDKYEIL (241 aa)) enclose the MHD domain. N6-acetyllysine is present on residues Lys-309 and Lys-351. Ser-493 carries the post-translational modification Phosphoserine.

This sequence belongs to the adaptor complexes medium subunit family. Delta-COP subfamily. Oligomeric complex that consists of at least the alpha, beta, beta', gamma, delta, epsilon and zeta subunits.

Its subcellular location is the cytoplasm. The protein localises to the golgi apparatus membrane. It localises to the cytoplasmic vesicle. The protein resides in the COPI-coated vesicle membrane. Its function is as follows. The coatomer is a cytosolic protein complex that binds to dilysine motifs and reversibly associates with Golgi non-clathrin-coated vesicles, which further mediate biosynthetic protein transport from the ER, via the Golgi up to the trans Golgi network. Coatomer complex is required for budding from Golgi membranes, and is essential for the retrograde Golgi-to-ER transport of dilysine-tagged proteins. In mammals, the coatomer can only be recruited by membranes associated to ADP-ribosylation factors (ARFs), which are small GTP-binding proteins; the complex also influences the Golgi structural integrity, as well as the processing, activity, and endocytic recycling of LDL receptors. The chain is Coatomer subunit delta (ARCN1) from Pongo abelii (Sumatran orangutan).